Consider the following 948-residue polypeptide: Insulin receptor substrate 1 (948 aa).

The 102-residue stretch at 8 to 109 (GMALSGYLKK…WLDKLLVLQR (102 aa)) folds into the PH domain. The IRS-type PTB domain occupies 122–236 (YDQVWQVVIQ…SAMSAKTESN (115 aa)). Residues 247-270 (PDLSHEPMRKRSSSANEASKPINV) form a disordered region. Residues Ser286 and Ser287 each carry the phosphoserine modification. Over residues 304-329 (RNGTLSESSNQTYFGSNHGLRSNTIS) the composition is skewed to polar residues. The segment at 304 to 373 (RNGTLSESSN…SDDNGSFSHY (70 aa)) is disordered. Ser342 carries the post-translational modification Phosphoserine. Position 410 is a phosphotyrosine; by INSR (Tyr410). Residues 410–413 (YIPM) carry the YXXM motif 1 motif. The interval 528–559 (ANRSQSSITKEGTSYSTSSNRQKKSTSAPLLS) is disordered. A compositionally biased stretch (polar residues) spans 529-556 (NRSQSSITKEGTSYSTSSNRQKKSTSAP). Ser554 carries the post-translational modification Phosphoserine. The YXXM motif 2 signature appears at 640 to 643 (YLEM). The interval 703 to 734 (EKKSNSPLNETPCSLKPTDVESNSHDEHSTNN) is disordered. The segment covering 720–731 (TDVESNSHDEHS) has biased composition (basic and acidic residues). Tyr891 is subject to Phosphotyrosine; by INSR. The segment at 907 to 948 (YLKRGSRESPPVSACPGDGNTYAKIDFDQSDSSSSSSNIFNT) is disordered. Phosphoserine occurs at positions 912 and 915. Residue Tyr928 is modified to Phosphotyrosine; by INSR. Positions 936-948 (SDSSSSSSNIFNT) are enriched in low complexity.

In terms of assembly, bindings to phosphatidylinositol 3-kinase and SHP2.

Functionally, activates phosphatidylinositol 3-kinase when bound to the regulatory p85 subunit. May mediate the control of various cellular processes by insulin-like peptides. When phosphorylated by the insulin receptor binds specifically to various cellular proteins containing SH2 domains. Involved in control of cell proliferation, cell size, and body and organ growth throughout development. Also has a role in a signaling pathway controlling the physiological response required to endure periods of low nutrient conditions. Insulin/insulin-like growth factor (IGF) signaling pathway has a role in regulating aging and is necessary in the ovary for vitellogenic maturation. The polypeptide is Insulin receptor substrate 1 (Drosophila erecta (Fruit fly)).